The chain runs to 374 residues: UDP-N-acetylglucosamine--N-acetylmuramyl-(pentapeptide) pyrophosphoryl-undecaprenol N-acetylglucosamine transferase (374 aa).

Residues 13–15 (TGG), asparagine 124, arginine 165, serine 193, and glutamine 294 each bind UDP-N-acetyl-alpha-D-glucosamine.

The protein belongs to the glycosyltransferase 28 family. MurG subfamily.

It localises to the cell inner membrane. It catalyses the reaction di-trans,octa-cis-undecaprenyl diphospho-N-acetyl-alpha-D-muramoyl-L-alanyl-D-glutamyl-meso-2,6-diaminopimeloyl-D-alanyl-D-alanine + UDP-N-acetyl-alpha-D-glucosamine = di-trans,octa-cis-undecaprenyl diphospho-[N-acetyl-alpha-D-glucosaminyl-(1-&gt;4)]-N-acetyl-alpha-D-muramoyl-L-alanyl-D-glutamyl-meso-2,6-diaminopimeloyl-D-alanyl-D-alanine + UDP + H(+). Its pathway is cell wall biogenesis; peptidoglycan biosynthesis. Its function is as follows. Cell wall formation. Catalyzes the transfer of a GlcNAc subunit on undecaprenyl-pyrophosphoryl-MurNAc-pentapeptide (lipid intermediate I) to form undecaprenyl-pyrophosphoryl-MurNAc-(pentapeptide)GlcNAc (lipid intermediate II). The protein is UDP-N-acetylglucosamine--N-acetylmuramyl-(pentapeptide) pyrophosphoryl-undecaprenol N-acetylglucosamine transferase of Rhizobium etli (strain ATCC 51251 / DSM 11541 / JCM 21823 / NBRC 15573 / CFN 42).